Here is a 371-residue protein sequence, read N- to C-terminus: Opsin Rh1 (371 aa).

The Extracellular portion of the chain corresponds to 1–47 (MERYSTPLIGPSFAALTNGSVTDKVTPDMAHLVHPYWNQFPAMEPKW). Residue asparagine 18 is glycosylated (N-linked (GlcNAc...) asparagine). Residues 48–72 (AKFLAAYMVLIATISWCGNGVVIYI) traverse the membrane as a helical segment. Over 73 to 84 (FSTTKSLRTPAN) the chain is Cytoplasmic. A helical transmembrane segment spans residues 85-110 (LLVINLAISDFGIMITNTPMMGINLF). Over 111–124 (YETWVLGPLMCDIY) the chain is Extracellular. Residues cysteine 121 and cysteine 198 are joined by a disulfide bond. A helical transmembrane segment spans residues 125-144 (GGLGSAFGCSSILSMCMISL). At 145–163 (DRYNVIVKGMAGQPMTIKL) the chain is on the cytoplasmic side. Residues 164–187 (AIMKIALIWFMASIWTLAPVFGWS) traverse the membrane as a helical segment. Over 188 to 211 (RYVPEGNLTSCGIDYLERDWNPRS) the chain is Extracellular. Residues 212 to 239 (YLIFYSIFVYYLPLFLICYSYWFIIAAV) form a helical membrane-spanning segment. At 240–274 (SAHEKAMREQAKKMNVKSLRSSEDADKSAEGKLAK) the chain is on the cytoplasmic side. Residues 275 to 298 (VALVTISLWFMAWTPYTIINTLGL) traverse the membrane as a helical segment. The Extracellular portion of the chain corresponds to 299–305 (FKYEGLT). A helical transmembrane segment spans residues 306 to 330 (PLNTIWGACFAKSAACYNPIVYGIS). Lysine 317 is subject to N6-(retinylidene)lysine. The Cytoplasmic segment spans residues 331 to 371 (HPKYGIALKEKCPCCVFGKVDDGKASDATSQATNNESETKA).

It belongs to the G-protein coupled receptor 1 family. Opsin subfamily. In terms of processing, phosphorylated on some or all of the serine and threonine residues present in the C-terminal region.

It localises to the cell projection. The protein localises to the rhabdomere membrane. Visual pigments are the light-absorbing molecules that mediate vision. They consist of an apoprotein, opsin, covalently linked to cis-retinal. The polypeptide is Opsin Rh1 (NINAE) (Calliphora vicina (Blue blowfly)).